We begin with the raw amino-acid sequence, 461 residues long: F-box protein At3g62230 (461 aa).

The 49-residue stretch at 7 to 55 (VDIISTLSDFLLVLIISNLSFKEALSTSRLSTRWRHICRETRNISFRED) folds into the F-box domain.

Part of a SCF (ASK-cullin-F-box) protein ligase complex. Interacts with ASK4.

The protein resides in the nucleus. It participates in protein modification; protein ubiquitination. Component of SCF(ASK-cullin-F-box) E3 ubiquitin ligase complexes, which may mediate the ubiquitination and subsequent proteasomal degradation of target proteins. This is F-box protein At3g62230 from Arabidopsis thaliana (Mouse-ear cress).